The following is a 98-amino-acid chain: NADH-ubiquinone oxidoreductase chain 4L (98 aa).

3 helical membrane-spanning segments follow: residues 1–21 (MSSI…GLLM), 29–49 (SLLC…VTML), and 61–81 (VMLM…LVTV).

This sequence belongs to the complex I subunit 4L family. Core subunit of respiratory chain NADH dehydrogenase (Complex I) which is composed of 45 different subunits.

It localises to the mitochondrion inner membrane. The enzyme catalyses a ubiquinone + NADH + 5 H(+)(in) = a ubiquinol + NAD(+) + 4 H(+)(out). In terms of biological role, core subunit of the mitochondrial membrane respiratory chain NADH dehydrogenase (Complex I) which catalyzes electron transfer from NADH through the respiratory chain, using ubiquinone as an electron acceptor. Part of the enzyme membrane arm which is embedded in the lipid bilayer and involved in proton translocation. This Tamandua tetradactyla (Southern anteater) protein is NADH-ubiquinone oxidoreductase chain 4L (MT-ND4L).